The primary structure comprises 296 residues: Phosphatidylserine decarboxylase proenzyme (296 aa).

Catalysis depends on charge relay system; for autoendoproteolytic cleavage activity residues D92, H149, and S251. S251 serves as the catalytic Schiff-base intermediate with substrate; via pyruvic acid; for decarboxylase activity. The residue at position 251 (S251) is a Pyruvic acid (Ser); by autocatalysis.

This sequence belongs to the phosphatidylserine decarboxylase family. PSD-B subfamily. Prokaryotic type I sub-subfamily. Heterodimer of a large membrane-associated beta subunit and a small pyruvoyl-containing alpha subunit. Requires pyruvate as cofactor. In terms of processing, is synthesized initially as an inactive proenzyme. Formation of the active enzyme involves a self-maturation process in which the active site pyruvoyl group is generated from an internal serine residue via an autocatalytic post-translational modification. Two non-identical subunits are generated from the proenzyme in this reaction, and the pyruvate is formed at the N-terminus of the alpha chain, which is derived from the carboxyl end of the proenzyme. The autoendoproteolytic cleavage occurs by a canonical serine protease mechanism, in which the side chain hydroxyl group of the serine supplies its oxygen atom to form the C-terminus of the beta chain, while the remainder of the serine residue undergoes an oxidative deamination to produce ammonia and the pyruvoyl prosthetic group on the alpha chain. During this reaction, the Ser that is part of the protease active site of the proenzyme becomes the pyruvoyl prosthetic group, which constitutes an essential element of the active site of the mature decarboxylase.

It localises to the cell membrane. The catalysed reaction is a 1,2-diacyl-sn-glycero-3-phospho-L-serine + H(+) = a 1,2-diacyl-sn-glycero-3-phosphoethanolamine + CO2. It participates in phospholipid metabolism; phosphatidylethanolamine biosynthesis; phosphatidylethanolamine from CDP-diacylglycerol: step 2/2. Catalyzes the formation of phosphatidylethanolamine (PtdEtn) from phosphatidylserine (PtdSer). This is Phosphatidylserine decarboxylase proenzyme from Hahella chejuensis (strain KCTC 2396).